A 400-amino-acid chain; its full sequence is S-adenosylmethionine synthase (400 aa).

Gly136–Asp141 contacts ATP.

It belongs to the AdoMet synthase 2 family. Requires Mg(2+) as cofactor.

It carries out the reaction L-methionine + ATP + H2O = S-adenosyl-L-methionine + phosphate + diphosphate. Its pathway is amino-acid biosynthesis; S-adenosyl-L-methionine biosynthesis; S-adenosyl-L-methionine from L-methionine: step 1/1. Its function is as follows. Catalyzes the formation of S-adenosylmethionine from methionine and ATP. This Methanospirillum hungatei JF-1 (strain ATCC 27890 / DSM 864 / NBRC 100397 / JF-1) protein is S-adenosylmethionine synthase.